We begin with the raw amino-acid sequence, 495 residues long: AAA-ATPase At2g18193 (495 aa).

Residues 7–28 traverse the membrane as a helical segment; it reads FSFSPSSLFSAYASLTGFLMLF. 250–257 contacts ATP; it reads GPPGTGKS. Residues 451-495 form a disordered region; the sequence is EVSICKATDDDEKQNGSLGCVKKKKKGGKQKGKGKGKGKAKTYLI. A compositionally biased stretch (basic residues) spans 471-495; it reads VKKKKKGGKQKGKGKGKGKAKTYLI.

Belongs to the AAA ATPase family. BCS1 subfamily. Mg(2+) serves as cofactor.

It is found in the membrane. The catalysed reaction is ATP + H2O = ADP + phosphate + H(+). In Arabidopsis thaliana (Mouse-ear cress), this protein is AAA-ATPase At2g18193.